A 166-amino-acid chain; its full sequence is Cofilin-2 (166 aa).

An N-acetylalanine modification is found at Ala2. At Ser3 the chain carries Phosphoserine. Residues 4–153 (GVTVNDEVIK…KDRSTLGEKL (150 aa)) enclose the ADF-H domain. Thr6 is subject to Phosphothreonine. The Nuclear localization signal signature appears at 30–34 (KKRKK).

It belongs to the actin-binding proteins ADF family. The phosphorylation of Ser-24 may prevent recognition of the nuclear localization signal.

Its subcellular location is the nucleus matrix. The protein resides in the cytoplasm. It is found in the cytoskeleton. Controls reversibly actin polymerization and depolymerization in a pH-sensitive manner. It has the ability to bind G- and F-actin in a 1:1 ratio of cofilin to actin. It is the major component of intranuclear and cytoplasmic actin rods. This chain is Cofilin-2 (CFL2), found in Bos taurus (Bovine).